The following is a 1019-amino-acid chain: Enteropeptidase (1019 aa).

Gly-2 carries N-myristoyl glycine lipidation. The Cytoplasmic portion of the chain corresponds to 2 to 18; that stretch reads GSKRGISSRHHSLSSYE. A helical; Signal-anchor for type II membrane protein transmembrane segment spans residues 19–47; it reads IMFAALFAILVVLCAGLIAVSCLTIKESQ. The Extracellular segment spans residues 48–1019; it reads RGAALGQSHE…FTEWIQSFLH (972 aa). The SEA domain maps to 54-169; it reads QSHEARATFK…NSVDILDKLT (116 aa). N-linked (GlcNAc...) asparagine glycosylation is found at Asn-116, Asn-147, and Asn-179. In terms of domain architecture, LDL-receptor class A 1 spans 182–223; sequence IECLPGSSPCTDALTCIKADLFCDGEVNCPDGSDEDNKMCAT. Disulfide bonds link Cys-184–Cys-197, Cys-191–Cys-210, Cys-204–Cys-221, and Cys-225–Cys-253. Residues 225–334 enclose the CUB 1 domain; the sequence is CDGRFLLTGS…VGFNATYTAF (110 aa). Residues Asn-328, Asn-335, Asn-388, Asn-440, Asn-470, Asn-503, Asn-534, and Asn-630 are each glycosylated (N-linked (GlcNAc...) asparagine). Residues 342-504 enclose the MAM domain; that stretch reads YEKINCNFED…ISLTYGICNG (163 aa). Cys-524 and Cys-552 are joined by a disulfide. The CUB 2 domain maps to 524–634; that stretch reads CGGPFELWEP…GGFKANFTTG (111 aa). One can recognise an LDL-receptor class A 2 domain in the interval 641–679; it reads EPCKADHFQCKNGECVPLVNLCDGHLHCEDGSDEADCVR. Disulfide bonds link Cys-643-Cys-655, Cys-650-Cys-668, and Cys-662-Cys-677. Positions 678-771 constitute an SRCR domain; the sequence is VRFFNGTTNN…LIRLQCNHKS (94 aa). 3 N-linked (GlcNAc...) asparagine glycosylation sites follow: Asn-682, Asn-706, and Asn-725. Intrachain disulfides connect Cys-757/Cys-767, Cys-772/Cys-896, and Cys-810/Cys-826. The Peptidase S1 domain occupies 785–1019; sequence IVGGSNAKEG…FTEWIQSFLH (235 aa). Residue His-825 is the Charge relay system of the active site. Asn-848 is a glycosylation site (N-linked (GlcNAc...) asparagine). Asp-876 functions as the Charge relay system in the catalytic mechanism. Asn-887, Asn-909, and Asn-949 each carry an N-linked (GlcNAc...) asparagine glycan. 3 disulfide bridges follow: Cys-910-Cys-977, Cys-941-Cys-956, and Cys-967-Cys-995. Ser-971 functions as the Charge relay system in the catalytic mechanism.

Belongs to the peptidase S1 family. In terms of assembly, heterodimer of a catalytic (light) chain and a multidomain (heavy) chain linked by a disulfide bond. In terms of processing, the chains are derived from a single precursor that is cleaved by a trypsin-like protease. As to expression, intestinal brush border.

The protein localises to the membrane. The enzyme catalyses Activation of trypsinogen by selective cleavage of 6-Lys-|-Ile-7 bond.. Its function is as follows. Responsible for initiating activation of pancreatic proteolytic proenzymes (trypsin, chymotrypsin and carboxypeptidase A). It catalyzes the conversion of trypsinogen to trypsin which in turn activates other proenzymes including chymotrypsinogen, procarboxypeptidases, and proelastases. The polypeptide is Enteropeptidase (TMPRSS15) (Homo sapiens (Human)).